The primary structure comprises 429 residues: Glutamate dehydrogenase B (429 aa).

The interval 1 to 20 (MAQTPPPESAPSTDSEPETA) is disordered. Lysine 119 is a catalytic residue.

This sequence belongs to the Glu/Leu/Phe/Val dehydrogenases family. Homohexamer.

This is Glutamate dehydrogenase B (gdhB) from Halobacterium salinarum (strain ATCC 700922 / JCM 11081 / NRC-1) (Halobacterium halobium).